We begin with the raw amino-acid sequence, 440 residues long: tRNA modification GTPase MnmE (440 aa).

Residues R23, E80, and K120 each coordinate (6S)-5-formyl-5,6,7,8-tetrahydrofolate. Positions 217 to 366 (GLKIVIAGEP…LLAMLQAHLP (150 aa)) constitute a TrmE-type G domain. Residue N227 coordinates K(+). Residues 227–232 (NAGKSS), 246–252 (TEIAGTT), and 271–274 (DTAG) each bind GTP. S231 is a binding site for Mg(2+). 3 residues coordinate K(+): T246, I248, and T251. Position 252 (T252) interacts with Mg(2+). K440 is a binding site for (6S)-5-formyl-5,6,7,8-tetrahydrofolate.

The protein belongs to the TRAFAC class TrmE-Era-EngA-EngB-Septin-like GTPase superfamily. TrmE GTPase family. Homodimer. Heterotetramer of two MnmE and two MnmG subunits. It depends on K(+) as a cofactor.

The protein resides in the cytoplasm. Its function is as follows. Exhibits a very high intrinsic GTPase hydrolysis rate. Involved in the addition of a carboxymethylaminomethyl (cmnm) group at the wobble position (U34) of certain tRNAs, forming tRNA-cmnm(5)s(2)U34. This Sinorhizobium medicae (strain WSM419) (Ensifer medicae) protein is tRNA modification GTPase MnmE.